A 264-amino-acid polypeptide reads, in one-letter code: ATP synthase subunit a (264 aa).

6 helical membrane passes run 29–49 (TWHIDSLFFSVGLGVLFLWIF), 90–110 (IAPLALTIFVWVFMMNFMDMI), 134–154 (DVNITFSLAIGVFLLIIFYSI), 177–197 (IPVNLLLETVTLIAKPISLAL), 208–228 (LIFILIALMYGTNLLLSTLGV), and 235–255 (LIFHILVITLQAFIFMMLTIV).

The protein belongs to the ATPase A chain family. As to quaternary structure, F-type ATPases have 2 components, CF(1) - the catalytic core - and CF(0) - the membrane proton channel. CF(1) has five subunits: alpha(3), beta(3), gamma(1), delta(1), epsilon(1). CF(0) has three main subunits: a(1), b(2) and c(9-12). The alpha and beta chains form an alternating ring which encloses part of the gamma chain. CF(1) is attached to CF(0) by a central stalk formed by the gamma and epsilon chains, while a peripheral stalk is formed by the delta and b chains.

It is found in the cell inner membrane. In terms of biological role, key component of the proton channel; it plays a direct role in the translocation of protons across the membrane. The polypeptide is ATP synthase subunit a (Shewanella baltica (strain OS223)).